The primary structure comprises 229 residues: MKLVLIRHGQSEWNKLNLFTGWHDVDLSQEGVVEAMTAGKRIKEAGLEFDVAFTSVLTRAIKTLNYVLEESDQMWVPVHKSWRLNERHYGALQGLNKQETAEKYGADQVQKWRRSYDTLPPLLEENDERQAKNDRRYQLLDTHAIPSGENLKVTLERVIPYWMDTIAPEIKEGRRVVIAAHGNSLRALVKFLEGISDDEIMDLEIPTGVPLVYELNDDLKPVNKYYLDK.

Residues 7–14 (RHGQSEWN), 20–21 (TG), Arg-59, 86–89 (ERHY), Lys-97, 113–114 (RR), and 182–183 (GN) contribute to the substrate site. The active-site Tele-phosphohistidine intermediate is the His-8. Glu-86 (proton donor/acceptor) is an active-site residue.

Belongs to the phosphoglycerate mutase family. BPG-dependent PGAM subfamily.

The catalysed reaction is (2R)-2-phosphoglycerate = (2R)-3-phosphoglycerate. Its pathway is carbohydrate degradation; glycolysis; pyruvate from D-glyceraldehyde 3-phosphate: step 3/5. Its function is as follows. Catalyzes the interconversion of 2-phosphoglycerate and 3-phosphoglycerate. The sequence is that of 2,3-bisphosphoglycerate-dependent phosphoglycerate mutase from Listeria monocytogenes serotype 4a (strain HCC23).